A 399-amino-acid chain; its full sequence is Glutamine synthetase 1, mitochondrial (399 aa).

The transit peptide at 1 to 27 (MALRVAGLFLKKELVAPATQQLRLLRT) directs the protein to the mitochondrion. The 82-residue stretch at 62–143 (VQATYLWIDG…VLCDTYSADG (82 aa)) folds into the GS beta-grasp domain. One can recognise a GS catalytic domain in the interval 150 to 399 (KRAAFQAAID…AIVRTCLLNE (250 aa)).

Belongs to the glutamine synthetase family. In terms of assembly, homooctamer.

It localises to the mitochondrion. It catalyses the reaction L-glutamate + NH4(+) + ATP = L-glutamine + ADP + phosphate + H(+). This chain is Glutamine synthetase 1, mitochondrial (Gs1), found in Drosophila melanogaster (Fruit fly).